The chain runs to 250 residues: NADH-quinone oxidoreductase subunit B 2 (250 aa).

Residues cysteine 41, cysteine 42, cysteine 107, and cysteine 137 each contribute to the [4Fe-4S] cluster site.

It belongs to the complex I 20 kDa subunit family. As to quaternary structure, NDH-1 is composed of 14 different subunits. Subunits NuoB, C, D, E, F, and G constitute the peripheral sector of the complex. The cofactor is [4Fe-4S] cluster.

It localises to the cell membrane. It carries out the reaction a quinone + NADH + 5 H(+)(in) = a quinol + NAD(+) + 4 H(+)(out). Its function is as follows. NDH-1 shuttles electrons from NADH, via FMN and iron-sulfur (Fe-S) centers, to quinones in the respiratory chain. The immediate electron acceptor for the enzyme in this species is believed to be ubiquinone. Couples the redox reaction to proton translocation (for every two electrons transferred, four hydrogen ions are translocated across the cytoplasmic membrane), and thus conserves the redox energy in a proton gradient. This Herpetosiphon aurantiacus (strain ATCC 23779 / DSM 785 / 114-95) protein is NADH-quinone oxidoreductase subunit B 2.